The primary structure comprises 113 residues: T cell receptor alpha variable 36/delta variable 7 (113 aa).

Positions 1–21 (MMKCPQALLAIFWLLLSWVSS) are cleaved as a signal peptide. In terms of domain architecture, Ig-like spans 23-113 (DKVVQSPLSL…DSAIYLCAVE (91 aa)). 2 N-linked (GlcNAc...) asparagine glycosylation sites follow: Asn43 and Asn96. Residues Cys44 and Cys110 are joined by a disulfide bond.

Alpha-beta TR is a heterodimer composed of an alpha and beta chain; disulfide-linked. The alpha-beta TR is associated with the transmembrane signaling CD3 coreceptor proteins to form the TR-CD3 (TcR or TCR). The assembly of alpha-beta TR heterodimers with CD3 occurs in the endoplasmic reticulum where a single alpha-beta TR heterodimer associates with one CD3D-CD3E heterodimer, one CD3G-CD3E heterodimer and one CD247 homodimer forming a stable octameric structure. CD3D-CD3E and CD3G-CD3E heterodimers preferentially associate with TR alpha and TR beta chains, respectively. The association of the CD247 homodimer is the last step of TcR assembly in the endoplasmic reticulum and is required for transport to the cell surface.

The protein localises to the cell membrane. Functionally, v region of the variable domain of T cell receptor (TR) alpha chain that participates in the antigen recognition. Alpha-beta T cell receptors are antigen specific receptors which are essential to the immune response and are present on the cell surface of T lymphocytes. Recognize peptide-major histocompatibility (MH) (pMH) complexes that are displayed by antigen presenting cells (APC), a prerequisite for efficient T cell adaptive immunity against pathogens. Binding of alpha-beta TR to pMH complex initiates TR-CD3 clustering on the cell surface and intracellular activation of LCK that phosphorylates the ITAM motifs of CD3G, CD3D, CD3E and CD247 enabling the recruitment of ZAP70. In turn ZAP70 phosphorylates LAT, which recruits numerous signaling molecules to form the LAT signalosome. The LAT signalosome propagates signal branching to three major signaling pathways, the calcium, the mitogen-activated protein kinase (MAPK) kinase and the nuclear factor NF-kappa-B (NF-kB) pathways, leading to the mobilization of transcription factors that are critical for gene expression and essential for T cell growth and differentiation. The T cell repertoire is generated in the thymus, by V-(D)-J rearrangement. This repertoire is then shaped by intrathymic selection events to generate a peripheral T cell pool of self-MH restricted, non-autoaggressive T cells. Post-thymic interaction of alpha-beta TR with the pMH complexes shapes TR structural and functional avidity. This is T cell receptor alpha variable 36/delta variable 7 from Homo sapiens (Human).